The chain runs to 645 residues: Acetyl-coenzyme A synthetase (645 aa).

CoA-binding positions include R190–K193, T308, and N332. ATP contacts are provided by residues G384–P386, D408–T413, D497, and R512. S520 contacts CoA. R523 lines the ATP pocket. Residues V534, H536, and V539 each contribute to the Mg(2+) site. A CoA-binding site is contributed by R581. N6-acetyllysine is present on K606.

It belongs to the ATP-dependent AMP-binding enzyme family. Mg(2+) is required as a cofactor. Post-translationally, acetylated. Deacetylation by the SIR2-homolog deacetylase activates the enzyme.

It catalyses the reaction acetate + ATP + CoA = acetyl-CoA + AMP + diphosphate. Catalyzes the conversion of acetate into acetyl-CoA (AcCoA), an essential intermediate at the junction of anabolic and catabolic pathways. AcsA undergoes a two-step reaction. In the first half reaction, AcsA combines acetate with ATP to form acetyl-adenylate (AcAMP) intermediate. In the second half reaction, it can then transfer the acetyl group from AcAMP to the sulfhydryl group of CoA, forming the product AcCoA. This Bdellovibrio bacteriovorus (strain ATCC 15356 / DSM 50701 / NCIMB 9529 / HD100) protein is Acetyl-coenzyme A synthetase.